A 139-amino-acid chain; its full sequence is Large-conductance mechanosensitive channel (139 aa).

3 consecutive transmembrane segments (helical) span residues 16-36, 40-60, and 79-99; these read VIDL…VKAL, IVMP…LAWV, and GAFI…FMLV.

Belongs to the MscL family. As to quaternary structure, homopentamer.

The protein localises to the cell inner membrane. Channel that opens in response to stretch forces in the membrane lipid bilayer. May participate in the regulation of osmotic pressure changes within the cell. The chain is Large-conductance mechanosensitive channel from Phenylobacterium zucineum (strain HLK1).